We begin with the raw amino-acid sequence, 423 residues long: Cytochrome c biogenesis protein Ccs1 (423 aa).

The next 3 membrane-spanning stretches (helical) occupy residues 11–31 (LKFAIALLLLISITITFGSII), 70–90 (NFWFISLLLSLGISLIACTFF), and 153–173 (IAPVFVHLSIILILLGSIFAS).

Belongs to the Ccs1/CcsB family. May interact with CcsA.

Its subcellular location is the plastid. It localises to the chloroplast thylakoid membrane. Required during biogenesis of c-type cytochromes (cytochrome c6 and cytochrome f) at the step of heme attachment. The polypeptide is Cytochrome c biogenesis protein Ccs1 (Heterosigma akashiwo (strain NIES-293 / 8280G21-1)).